We begin with the raw amino-acid sequence, 1164 residues long: DNA-directed RNA polymerase 133 kDa polypeptide (1164 aa).

It belongs to the RNA polymerase beta chain family. In terms of assembly, the DNA-dependent RNA polymerase used for intermediate and late genes expression consists of eight subunits 147 kDa, 133 kDa, 35 kDa, 30 kDa, 22 kDa, 19 kDa, 18 kDa and 7 kDa totalling more than 500 kDa in mass. The same holoenzyme, with the addition of the transcription-specificity factor RAP94, is used for early gene expression.

The protein localises to the virion. The catalysed reaction is RNA(n) + a ribonucleoside 5'-triphosphate = RNA(n+1) + diphosphate. Functionally, part of the DNA-dependent RNA polymerase which catalyzes the transcription of viral DNA into RNA using the four ribonucleoside triphosphates as substrates. Responsible for the transcription of early, intermediate and late genes. DNA-dependent RNA polymerase associates with the early transcription factor (ETF), itself composed of OPG118 and OPG133, thereby allowing the early genes transcription. Late transcription, and probably also intermediate transcription, require newly synthesized RNA polymerase. The sequence is that of DNA-directed RNA polymerase 133 kDa polypeptide (OPG151) from Homo sapiens (Human).